A 360-amino-acid polypeptide reads, in one-letter code: Isopentenyl-diphosphate delta-isomerase (360 aa).

A substrate-binding site is contributed by 12-13 (RK). FMN is bound by residues 69 to 71 (SMT), Ser-99, and Asn-130. A substrate-binding site is contributed by 99–101 (SQR). A substrate-binding site is contributed by Gln-164. Glu-165 is a Mg(2+) binding site. Residues Lys-196, Thr-226, 277–279 (GVR), and 298–299 (AK) each bind FMN.

It belongs to the IPP isomerase type 2 family. In terms of assembly, homooctamer. Dimer of tetramers. The cofactor is FMN. NADPH is required as a cofactor. It depends on Mg(2+) as a cofactor.

Its subcellular location is the cytoplasm. The catalysed reaction is isopentenyl diphosphate = dimethylallyl diphosphate. Functionally, involved in the biosynthesis of isoprenoids. Catalyzes the 1,3-allylic rearrangement of the homoallylic substrate isopentenyl (IPP) to its allylic isomer, dimethylallyl diphosphate (DMAPP). The polypeptide is Isopentenyl-diphosphate delta-isomerase (Halobacterium salinarum (strain ATCC 700922 / JCM 11081 / NRC-1) (Halobacterium halobium)).